Consider the following 450-residue polypeptide: Ribulose bisphosphate carboxylase large chain (450 aa).

N6,N6,N6-trimethyllysine is present on lysine 4. 2 residues coordinate substrate: asparagine 113 and threonine 163. Lysine 165 (proton acceptor) is an active-site residue. Lysine 167 is a binding site for substrate. The Mg(2+) site is built by lysine 191, aspartate 193, and glutamate 194. At lysine 191 the chain carries N6-carboxylysine. Histidine 284 serves as the catalytic Proton acceptor. Residues arginine 285, histidine 317, and serine 369 each coordinate substrate.

This sequence belongs to the RuBisCO large chain family. Type I subfamily. Heterohexadecamer of 8 large chains and 8 small chains; disulfide-linked. The disulfide link is formed within the large subunit homodimers. Mg(2+) is required as a cofactor. Post-translationally, the disulfide bond which can form in the large chain dimeric partners within the hexadecamer appears to be associated with oxidative stress and protein turnover.

The protein resides in the plastid. It localises to the chloroplast. It catalyses the reaction 2 (2R)-3-phosphoglycerate + 2 H(+) = D-ribulose 1,5-bisphosphate + CO2 + H2O. It carries out the reaction D-ribulose 1,5-bisphosphate + O2 = 2-phosphoglycolate + (2R)-3-phosphoglycerate + 2 H(+). In terms of biological role, ruBisCO catalyzes two reactions: the carboxylation of D-ribulose 1,5-bisphosphate, the primary event in carbon dioxide fixation, as well as the oxidative fragmentation of the pentose substrate in the photorespiration process. Both reactions occur simultaneously and in competition at the same active site. In Crassula rupestris subsp. marnieriana (Pygmyweed), this protein is Ribulose bisphosphate carboxylase large chain.